Here is a 1610-residue protein sequence, read N- to C-terminus: Voltage-dependent L-type calcium channel subunit alpha-1D (1610 aa).

A disordered region spans residues 1-99; sequence MMMMMMKKMQ…SKKQGNSSNS (99 aa). The Cytoplasmic portion of the chain corresponds to 1 to 125; the sequence is MMMMMMKKMQ…RACISIVEWK (125 aa). The span at 37–51 shows a compositional bias: polar residues; it reads GPTSQPNSSKQTVLS. Over residues 53–66 the composition is skewed to low complexity; it reads QAAIDAARQAKAAQ. The span at 81–92 shows a compositional bias: basic residues; that stretch reads QRKRQQYAKSKK. The I repeat unit spans residues 112–408; sequence NPIRRACISI…LVLGVLSGEF (297 aa). The chain crosses the membrane as a helical span at residues 126-144; it reads PFDIFILLAIFANCVALAI. Residues 145–162 are Extracellular-facing; the sequence is YIPFPEDDSNSTNHNLEK. Asparagine 154 is a glycosylation site (N-linked (GlcNAc...) asparagine). The helical transmembrane segment at 163 to 182 threads the bilayer; it reads VEYAFLIIFTVETFLKIIAY. Residues 183-194 are Cytoplasmic-facing; sequence GLLLHPNAYVRN. Residues 195–213 traverse the membrane as a helical segment; that stretch reads GWNLLDFVIVIVGLFSVIL. Residues 214–234 are Extracellular-facing; it reads EQLTKETEGGNHSSGKSGGFD. N-linked (GlcNAc...) asparagine glycosylation is present at asparagine 224. Residues 235–253 form a helical membrane-spanning segment; that stretch reads VKALRAFRVLRPLRLVSGV. At 254-272 the chain is on the cytoplasmic side; the sequence is PSLQVVLNSIIKAMVPLLH. A helical membrane pass occupies residues 273–292; the sequence is IALLVLFVIIIYAIIGLELF. Residues 293–380 are Extracellular-facing; sequence IGKMHKTCFF…WMNDAMGFEL (88 aa). Asparagine 328 carries N-linked (GlcNAc...) asparagine glycosylation. Residue glutamate 363 participates in Ca(2+) binding. A helical membrane pass occupies residues 381-405; it reads PWVYFVSLVIFGSFFVLNLVLGVLS. Topologically, residues 406 to 522 are cytoplasmic; sequence GEFSKEREKA…RRCRAAVKSV (117 aa). Positions 428–445 are binding to the beta subunit; that stretch reads EQLEEDLKGYLDWITQAE. Residues 448–487 are disordered; sequence DPENEEEGGEEGKRNTSMPTSETESVNTENVSGEGETQGS. The span at 462–487 shows a compositional bias: polar residues; that stretch reads NTSMPTSETESVNTENVSGEGETQGS. The stretch at 508-754 is one II repeat; that stretch reads NRFNRRRCRA…VFLAIAVDNL (247 aa). Residues 523-542 traverse the membrane as a helical segment; sequence TFYWLVIVLVFLNTLTISSE. Over 543-557 the chain is Extracellular; that stretch reads HYNQPDWLTQIQDIA. Residues 558-576 traverse the membrane as a helical segment; that stretch reads NKVLLALFTCEMLVKMYSL. At 577–584 the chain is on the cytoplasmic side; that stretch reads GLQAYFVS. A helical transmembrane segment spans residues 585–603; that stretch reads LFNRFDCFVVCGGITETIL. Over 604–613 the chain is Extracellular; the sequence is VELELMSPLG. Residues 614–632 form a helical membrane-spanning segment; it reads VSVFRCVRLLRIFKVTRHW. At 633-651 the chain is on the cytoplasmic side; that stretch reads TSLSNLVASLLNSMKSIAS. Residues 652–672 traverse the membrane as a helical segment; the sequence is LLLLLFLFIIIFSLLGMQLFG. Residues 673–726 lie on the Extracellular side of the membrane; the sequence is GKFNFDETQTKRSTFDNFPQALLTVFQILTGEDWNAVMYDGIMAYGGPSSSGMI. Residue glutamate 704 coordinates Ca(2+). The chain crosses the membrane as a helical span at residues 727–751; the sequence is VCIYFIILFICGNYILLNVFLAIAV. Residues 752 to 884 lie on the Cytoplasmic side of the membrane; the sequence is DNLADAESLN…VGCHKLINHH (133 aa). Residues 765 to 789 are compositionally biased toward basic and acidic residues; sequence KEEAEEKERKKIARKESLENKKNNK. Positions 765 to 846 are disordered; it reads KEEAEEKERK…VPAGPRPRRI (82 aa). Residues 790–801 show a composition bias toward polar residues; it reads PEVNQIANSDNK. Over residues 824–836 the composition is skewed to acidic residues; that stretch reads VGEEEEEEEEEPE. The stretch at 871–1153 is one III repeat; sequence NPIRVGCHKL…IFVGFVIVTF (283 aa). The chain crosses the membrane as a helical span at residues 885–903; it reads IFTNLILVFIMLSSAALAA. Over 904-919 the chain is Extracellular; sequence EDPIRSHSFRNTILGY. A helical membrane pass occupies residues 920 to 939; the sequence is FDYAFTAIFTVEILLKMTTF. The Cytoplasmic segment spans residues 940–951; sequence GAFLHKGAFCRN. A helical membrane pass occupies residues 952 to 970; that stretch reads YFNLLDMLVVGVSLVSFGI. Residues 971-976 lie on the Extracellular side of the membrane; the sequence is QSSAIS. Residues 977–996 form a helical membrane-spanning segment; the sequence is VVKILRVLRVLRPLRAINRA. The Cytoplasmic segment spans residues 997–1015; that stretch reads KGLKHVVQCVFVAIRTIGN. The helical transmembrane segment at 1016 to 1035 threads the bilayer; that stretch reads IMIVTTLLQFMFACIGVQLF. Residues 1036-1125 are Extracellular-facing; sequence KGKFYRCTDE…AGPVYNHRVE (90 aa). Residues 1073-1163 form a dihydropyridine binding region; the sequence is RIWQNSDFNF…QEQGEKEYKN (91 aa). Glutamate 1099 contributes to the Ca(2+) binding site. Residues 1126 to 1146 form a helical membrane-spanning segment; sequence ISIFFIIYIIIVAFFMMNIFV. Topologically, residues 1147–1203 are cytoplasmic; sequence GFVIVTFQEQGEKEYKNCELDKNQRQCVEYALKARPLRRYIPKNPYQYKFWYVVNSS. The IV repeat unit spans residues 1190–1465; that stretch reads NPYQYKFWYV…LFVAVIMDNF (276 aa). A helical membrane pass occupies residues 1204–1222; the sequence is PFEYMMFVLIMLNTLCLAM. The Extracellular portion of the chain corresponds to 1223–1237; the sequence is QHYEQSKMFNDAMDI. Residues 1238 to 1257 traverse the membrane as a helical segment; it reads LNMVFTGVFTVEMVLKVIAF. At 1258–1264 the chain is on the cytoplasmic side; it reads KPKGYFS. The chain crosses the membrane as a helical span at residues 1265-1286; the sequence is DAWNTFDSLIVIGSIIDVALSE. The Extracellular segment spans residues 1287–1311; it reads ADPTESESLPLPTATPGNSEESNRI. The chain crosses the membrane as a helical span at residues 1312–1331; sequence SITFFRLFRVMRLVKLLSRG. Residues 1332-1350 are Cytoplasmic-facing; it reads EGIRTLLWTFIKSFQALPY. The chain crosses the membrane as a helical span at residues 1351–1370; that stretch reads VALLIAMLFFIYAVIGMQMF. Residues 1371–1437 are Extracellular-facing; sequence GKVAMRDNNQ…GEEYTCGSNF (67 aa). The segment at 1418–1484 is dihydropyridine binding; the sequence is LCDPDSDYNP…LGPHHLDEFK (67 aa). A phenylalkylamine binding region spans residues 1430–1473; that stretch reads EYTCGSNFAIVYFISFYMLCAFLIINLFVAVIMDNFDYLTRDWS. The chain crosses the membrane as a helical span at residues 1438-1462; that stretch reads AIVYFISFYMLCAFLIINLFVAVIM. Residues 1463–1610 are Cytoplasmic-facing; it reads DNFDYLTRDW…CFLSPSRSRS (148 aa).

Belongs to the calcium channel alpha-1 subunit (TC 1.A.1.11) family. CACNA1D subfamily. In terms of assembly, voltage-dependent calcium channels are multisubunit complexes, consisting of alpha-1, alpha-2, beta and delta subunits in a 1:1:1:1 ratio. The channel activity is directed by the pore-forming and voltage-sensitive alpha-1 subunit. In many cases, this subunit is sufficient to generate voltage-sensitive calcium channel activity. The auxiliary subunits beta and alpha-2/delta linked by a disulfide bridge regulate the channel activity. Interacts with RIMBP2. Interacts with CABP1 and CABP4, resulting in a near elimination of calcium-dependent inactivation of the channel. In terms of tissue distribution, expressed in brain, heart and skeletal muscle.

It is found in the membrane. The enzyme catalyses Ca(2+)(in) = Ca(2+)(out). In terms of biological role, voltage-sensitive calcium channels (VSCC) mediate the entry of calcium ions into excitable cells and are also involved in a variety of calcium-dependent processes, including muscle contraction, hormone or neurotransmitter release, gene expression, cell motility, cell division and cell death. The isoform alpha-1D gives rise to L-type calcium currents. Long-lasting (L-type) calcium channels belong to the 'high-voltage activated' (HVA) group. They are blocked by dihydropyridines (DHP), phenylalkylamines, and by benzothiazepines. This chain is Voltage-dependent L-type calcium channel subunit alpha-1D (CACNA1D), found in Mesocricetus auratus (Golden hamster).